The sequence spans 187 residues: ATP synthase subunit b, chloroplastic (187 aa).

Residues 34–56 (LINLAAVIGLLFYSGRSFLTNLL) traverse the membrane as a helical segment.

It belongs to the ATPase B chain family. In terms of assembly, F-type ATPases have 2 components, F(1) - the catalytic core - and F(0) - the membrane proton channel. F(1) has five subunits: alpha(3), beta(3), gamma(1), delta(1), epsilon(1). F(0) has four main subunits: a(1), b(1), b'(1) and c(10-14). The alpha and beta chains form an alternating ring which encloses part of the gamma chain. F(1) is attached to F(0) by a central stalk formed by the gamma and epsilon chains, while a peripheral stalk is formed by the delta, b and b' chains.

It localises to the plastid. It is found in the chloroplast thylakoid membrane. Its function is as follows. F(1)F(0) ATP synthase produces ATP from ADP in the presence of a proton or sodium gradient. F-type ATPases consist of two structural domains, F(1) containing the extramembraneous catalytic core and F(0) containing the membrane proton channel, linked together by a central stalk and a peripheral stalk. During catalysis, ATP synthesis in the catalytic domain of F(1) is coupled via a rotary mechanism of the central stalk subunits to proton translocation. In terms of biological role, component of the F(0) channel, it forms part of the peripheral stalk, linking F(1) to F(0). In Chlorokybus atmophyticus (Soil alga), this protein is ATP synthase subunit b, chloroplastic.